The following is a 507-amino-acid chain: Chromosomal replication initiator protein DnaA (507 aa).

The tract at residues 1–112 is domain I, interacts with DnaA modulators; that stretch reads MTDDPGSGFT…PATDEADDTT (112 aa). Residues 99-155 are disordered; the sequence is RIAPPATDEADDTTVPPSENPATTSPDTTTDNDEIDDSAAARGDNQHSWPSYFTERP. The span at 113–127 shows a compositional bias: polar residues; it reads VPPSENPATTSPDTT. The domain II stretch occupies residues 113–166; the sequence is VPPSENPATTSPDTTTDNDEIDDSAAARGDNQHSWPSYFTERPHNTDSATAGVT. The tract at residues 167–383 is domain III, AAA+ region; sequence SLNRRYTFDT…GALIRVTAFA (217 aa). ATP contacts are provided by G211, G213, K214, and T215. The interval 384–507 is domain IV, binds dsDNA; sequence SLNKTPIDKA…TTRIRQRSKR (124 aa).

The protein belongs to the DnaA family. In terms of assembly, oligomerizes as a right-handed, spiral filament on DNA at oriC.

It is found in the cytoplasm. In terms of biological role, plays an essential role in the initiation and regulation of chromosomal replication. ATP-DnaA binds to the origin of replication (oriC) to initiate formation of the DNA replication initiation complex once per cell cycle. Binds the DnaA box (a 9 base pair repeat at the origin) and separates the double-stranded (ds)DNA. Forms a right-handed helical filament on oriC DNA; dsDNA binds to the exterior of the filament while single-stranded (ss)DNA is stabiized in the filament's interior. The ATP-DnaA-oriC complex binds and stabilizes one strand of the AT-rich DNA unwinding element (DUE), permitting loading of DNA polymerase. After initiation quickly degrades to an ADP-DnaA complex that is not apt for DNA replication. Binds acidic phospholipids. This chain is Chromosomal replication initiator protein DnaA, found in Mycobacterium tuberculosis (strain ATCC 25177 / H37Ra).